A 503-amino-acid polypeptide reads, in one-letter code: GMP synthase [glutamine-hydrolyzing] (503 aa).

Residues 1 to 189 (MVLVLDFGSQ…FLELAGAKRD (189 aa)) form the Glutamine amidotransferase type-1 domain. Residue cysteine 78 is the Nucleophile of the active site. Active-site residues include histidine 164 and glutamate 166. In terms of domain architecture, GMPS ATP-PPase spans 190–378 (WTPEHVLEEL…LGLPDTLRLR (189 aa)). 217–223 (SGGVDSS) is an ATP binding site.

Homodimer.

The catalysed reaction is XMP + L-glutamine + ATP + H2O = GMP + L-glutamate + AMP + diphosphate + 2 H(+). The protein operates within purine metabolism; GMP biosynthesis; GMP from XMP (L-Gln route): step 1/1. Its function is as follows. Catalyzes the synthesis of GMP from XMP. This is GMP synthase [glutamine-hydrolyzing] from Thermus thermophilus (strain ATCC BAA-163 / DSM 7039 / HB27).